The sequence spans 219 residues: Small ribosomal subunit protein uS3 (219 aa).

In terms of domain architecture, KH type-2 spans 39–108 (IKEFIKKNYF…KVTVKVQEIK (70 aa)).

Belongs to the universal ribosomal protein uS3 family. As to quaternary structure, part of the 30S ribosomal subunit. Forms a tight complex with proteins S10 and S14.

Its function is as follows. Binds the lower part of the 30S subunit head. Binds mRNA in the 70S ribosome, positioning it for translation. This is Small ribosomal subunit protein uS3 from Fusobacterium nucleatum subsp. nucleatum (strain ATCC 25586 / DSM 15643 / BCRC 10681 / CIP 101130 / JCM 8532 / KCTC 2640 / LMG 13131 / VPI 4355).